The following is a 459-amino-acid chain: ATP synthase subunit beta (459 aa).

148-155 is a binding site for ATP; the sequence is GGAGVGKT.

This sequence belongs to the ATPase alpha/beta chains family. As to quaternary structure, F-type ATPases have 2 components, CF(1) - the catalytic core - and CF(0) - the membrane proton channel. CF(1) has five subunits: alpha(3), beta(3), gamma(1), delta(1), epsilon(1). CF(0) has three main subunits: a(1), b(2) and c(9-12). The alpha and beta chains form an alternating ring which encloses part of the gamma chain. CF(1) is attached to CF(0) by a central stalk formed by the gamma and epsilon chains, while a peripheral stalk is formed by the delta and b chains.

The protein resides in the cell inner membrane. It carries out the reaction ATP + H2O + 4 H(+)(in) = ADP + phosphate + 5 H(+)(out). In terms of biological role, produces ATP from ADP in the presence of a proton gradient across the membrane. The catalytic sites are hosted primarily by the beta subunits. The polypeptide is ATP synthase subunit beta (Vesicomyosocius okutanii subsp. Calyptogena okutanii (strain HA)).